The chain runs to 432 residues: 5-hydroxybenzimidazole synthase BzaA (432 aa).

Substrate is bound by residues M95, Y124, H163, 185 to 187 (SYG), and 226 to 229 (DGMR). H269 serves as a coordination point for Zn(2+). F292 provides a ligand contact to substrate. A Zn(2+)-binding site is contributed by H333. 3 residues coordinate [4Fe-4S] cluster: C409, C412, and C416.

This sequence belongs to the ThiC family. 5-hydroxybenzimidazole synthase subfamily. Requires [4Fe-4S] cluster as cofactor.

It carries out the reaction 5-amino-1-(5-phospho-beta-D-ribosyl)imidazole + AH2 + S-adenosyl-L-methionine = 5-hydroxybenzimidazole + 5'-deoxyadenosine + formate + L-methionine + A + NH4(+) + phosphate + 2 H(+). Its function is as follows. Together with BzaB, probably catalyzes the conversion of aminoimidazole ribotide (AIR) to 5-hydroxybenzimidazole (5-HBI) in a radical S-adenosyl-L-methionine (SAM)-dependent reaction. Is thus involved in the anaerobic biosynthesis of the benzimidazole lower axial ligand of the cobamide produced by M.thermoacetica. Requires BzaB for catalytic activity, as BzaA alone displays no activity. In Moorella thermoacetica (strain ATCC 39073 / JCM 9320), this protein is 5-hydroxybenzimidazole synthase BzaA.